A 329-amino-acid polypeptide reads, in one-letter code: Gut-specific cysteine proteinase (329 aa).

The N-terminal stretch at Met-1–Ala-15 is a signal peptide. The propeptide at Phe-16–Ser-84 is activation peptide. Cystine bridges form between Cys-98/Cys-127, Cys-110/Cys-155, Cys-146/Cys-204, Cys-147/Cys-151, Cys-183/Cys-208, and Cys-191/Cys-196. The active site involves Cys-113. Catalysis depends on residues His-275 and Asn-295.

This sequence belongs to the peptidase C1 family. In terms of tissue distribution, larvae exhibit strong expression in gut cells and weak expression in hypodermal cells. Adults exhibit the reverse: strong expression in hypodermal cells and weaker expression in gut cells.

Thiol protease. Has a role as a digestive enzyme. This is Gut-specific cysteine proteinase (cpr-1) from Caenorhabditis elegans.